Here is an 81-residue protein sequence, read N- to C-terminus: ATP synthase subunit c (81 aa).

The next 2 helical transmembrane spans lie at 7-27 (AASV…PGIG) and 57-77 (LAFM…LLFA).

The protein belongs to the ATPase C chain family. F-type ATPases have 2 components, F(1) - the catalytic core - and F(0) - the membrane proton channel. F(1) has five subunits: alpha(3), beta(3), gamma(1), delta(1), epsilon(1). F(0) has four main subunits: a(1), b(1), b'(1) and c(10-14). The alpha and beta chains form an alternating ring which encloses part of the gamma chain. F(1) is attached to F(0) by a central stalk formed by the gamma and epsilon chains, while a peripheral stalk is formed by the delta, b and b' chains.

Its subcellular location is the cellular thylakoid membrane. F(1)F(0) ATP synthase produces ATP from ADP in the presence of a proton or sodium gradient. F-type ATPases consist of two structural domains, F(1) containing the extramembraneous catalytic core and F(0) containing the membrane proton channel, linked together by a central stalk and a peripheral stalk. During catalysis, ATP synthesis in the catalytic domain of F(1) is coupled via a rotary mechanism of the central stalk subunits to proton translocation. Its function is as follows. Key component of the F(0) channel; it plays a direct role in translocation across the membrane. A homomeric c-ring of between 10-14 subunits forms the central stalk rotor element with the F(1) delta and epsilon subunits. In Synechococcus sp. (strain CC9311), this protein is ATP synthase subunit c.